A 585-amino-acid polypeptide reads, in one-letter code: Suppressor of mec-8 and unc-52 protein homolog 2 (585 aa).

A compositionally biased stretch (basic residues) spans 1-14; sequence MKPSKSHHKEKTAR. 2 disordered regions span residues 1-52 and 219-324; these read MKPS…SSFH and KKKK…PRDK. Residues 15-39 are compositionally biased toward basic and acidic residues; it reads RREEKLEESDNPKYRDRAKERRENQ. R-[ED] repeat units follow at residues 16–17, 29–30, 36–37, and 258–259; these read RE and RD. The segment covering 276 to 288 has biased composition (basic and acidic residues); that stretch reads LSTKQEEPPVART. R-[ED] repeat units follow at residues 322-323, 436-437, 445-446, 450-451, 540-541, and 542-543; these read RD and RE. The interval 523–585 is disordered; sequence FQFGVKMQDG…EAQTPKRSKH (63 aa). Residues 530–548 show a composition bias toward basic and acidic residues; the sequence is QDGRKTRKQNRDRDQKLNN. A Phosphothreonine modification is found at Thr579.

This sequence belongs to the RED family. As to quaternary structure, component of the spliceosome. Interacts with SMU1. Highly expressed in seedlings at 7 days after germination, young flowers before anthesis and developing siliques. Expressed at lower levels in roots, expanding leaves, open flowers, dry seeds and inflorescences. Not detected in senescing leaves.

The protein resides in the nucleus. Functionally, auxiliary spliceosomal protein involved in splicing of specific pre-mRNAs that affect multiple aspects of development. This chain is Suppressor of mec-8 and unc-52 protein homolog 2 (SMU2), found in Arabidopsis thaliana (Mouse-ear cress).